A 273-amino-acid chain; its full sequence is 3-methyl-2-oxobutanoate hydroxymethyltransferase (273 aa).

Positions 53 and 92 each coordinate Mg(2+). 3-methyl-2-oxobutanoate is bound by residues 53–54 (DS), Asp92, and Lys122. Glu124 contacts Mg(2+). Catalysis depends on Glu191, which acts as the Proton acceptor.

It belongs to the PanB family. Homodecamer; pentamer of dimers. It depends on Mg(2+) as a cofactor.

The protein resides in the cytoplasm. The enzyme catalyses 3-methyl-2-oxobutanoate + (6R)-5,10-methylene-5,6,7,8-tetrahydrofolate + H2O = 2-dehydropantoate + (6S)-5,6,7,8-tetrahydrofolate. It participates in cofactor biosynthesis; (R)-pantothenate biosynthesis; (R)-pantoate from 3-methyl-2-oxobutanoate: step 1/2. Catalyzes the reversible reaction in which hydroxymethyl group from 5,10-methylenetetrahydrofolate is transferred onto alpha-ketoisovalerate to form ketopantoate. The protein is 3-methyl-2-oxobutanoate hydroxymethyltransferase of Phocaeicola vulgatus (strain ATCC 8482 / DSM 1447 / JCM 5826 / CCUG 4940 / NBRC 14291 / NCTC 11154) (Bacteroides vulgatus).